The following is a 596-amino-acid chain: Glomulin (596 aa).

N-acetylalanine is present on Ala-2. Positions 2–555 (AVEELQSIIK…EEIPSMPPEM (554 aa)) are alpha-helical region with structural similarity to HEAT repeats. The important for interaction with RBX1 stretch occupies residues 299–596 (IDQLPMVLSP…STSEENVGIK (298 aa)).

In terms of assembly, interacts with FKBP4 and FKBP1A. Interacts with RBX1 (via RING domain). Identified in complexes that contain RBX1 plus one of the cullins CUL1, CUL2, CUL3, and CUL4A. Identified in a SCF complex composed of CUL1, RBX1, SKP1, FBXW7 and GLMN. Component of a SCF-like complex consisting of CUL7, RBX1, SKP1, FBXW8 and GLMN. Interacts with unphosphorylated MET and is released upon MET phosphorylation. Post-translationally, phosphorylated on tyrosine residues. In terms of tissue distribution, ubiquitous. Detected in embryonic vasculature and embryonic perichondrium, and in adult eye, brain, heart, testis, kidney, smooth muscle and skeletal muscle.

Regulatory component of cullin-RING-based SCF (SKP1-Cullin-F-box protein) E3 ubiquitin-protein ligase complexes. Inhibits E3 ubiquitin ligase activity by binding to the RING domain of RBX1 and inhibiting its interaction with the E2 ubiquitin-conjugating enzyme CDC34. Inhibits RBX1-mediated neddylation of CUL1. Required for normal stability and normal cellular levels of key components of SCF ubiquitin ligase complexes, including FBXW7, RBX1, CUL1, CUL2, CUL3, CUL4A, and thereby contributes to the regulation of CCNE1 and MYC levels. Essential for normal development of the vasculature. Contributes to the regulation of RPS6KB1 phosphorylation. The sequence is that of Glomulin (Glmn) from Mus musculus (Mouse).